A 424-amino-acid polypeptide reads, in one-letter code: Serine hydroxymethyltransferase (424 aa).

(6S)-5,6,7,8-tetrahydrofolate-binding positions include leucine 119 and 123–125 (GHL). Lysine 228 is modified (N6-(pyridoxal phosphate)lysine). A (6S)-5,6,7,8-tetrahydrofolate-binding site is contributed by 353 to 355 (SAF).

It belongs to the SHMT family. Homodimer. Pyridoxal 5'-phosphate serves as cofactor.

The protein resides in the cytoplasm. It catalyses the reaction (6R)-5,10-methylene-5,6,7,8-tetrahydrofolate + glycine + H2O = (6S)-5,6,7,8-tetrahydrofolate + L-serine. The protein operates within one-carbon metabolism; tetrahydrofolate interconversion. It functions in the pathway amino-acid biosynthesis; glycine biosynthesis; glycine from L-serine: step 1/1. Catalyzes the reversible interconversion of serine and glycine with tetrahydrofolate (THF) serving as the one-carbon carrier. Also exhibits THF-independent aldolase activity toward beta-hydroxyamino acids, producing glycine and aldehydes, via a retro-aldol mechanism. This chain is Serine hydroxymethyltransferase, found in Natronomonas pharaonis (strain ATCC 35678 / DSM 2160 / CIP 103997 / JCM 8858 / NBRC 14720 / NCIMB 2260 / Gabara) (Halobacterium pharaonis).